The following is a 346-amino-acid chain: Probable choline kinase 1 (346 aa).

Positions 73, 210, and 227 each coordinate ATP.

This sequence belongs to the choline/ethanolamine kinase family. As to expression, expressed in roots. Expressed at low levels in cauline leaves and flowers.

The enzyme catalyses choline + ATP = phosphocholine + ADP + H(+). It functions in the pathway phospholipid metabolism; phosphatidylcholine biosynthesis; phosphocholine from choline: step 1/1. In terms of biological role, involved in phospholipid biosynthesis. Catalyzes the first step in phosphatidylcholine biosynthesis. This Arabidopsis thaliana (Mouse-ear cress) protein is Probable choline kinase 1 (CK1).